Consider the following 476-residue polypeptide: GTPase Der (476 aa).

EngA-type G domains are found at residues 3–167 (FTVA…GEER) and 205–380 (LRVA…KVWN). GTP-binding positions include 9 to 16 (GRPNVGKS), 56 to 60 (DTAGL), 119 to 122 (NKSE), 211 to 218 (GRPNAGKS), 258 to 262 (DTAGM), and 323 to 326 (NKWD). Positions 381-465 (RRISTARLNR…PIRVHFRASE (85 aa)) constitute a KH-like domain.

This sequence belongs to the TRAFAC class TrmE-Era-EngA-EngB-Septin-like GTPase superfamily. EngA (Der) GTPase family. Associates with the 50S ribosomal subunit.

GTPase that plays an essential role in the late steps of ribosome biogenesis. The polypeptide is GTPase Der (Rhizobium meliloti (strain 1021) (Ensifer meliloti)).